A 509-amino-acid chain; its full sequence is 2-isopropylmalate synthase (509 aa).

A Pyruvate carboxyltransferase domain is found at 5–267 (IQIFDTTLRD…QTALNLEETK (263 aa)). Residues Asp14, His202, His204, and Asn238 each contribute to the Mn(2+) site. Residues 391 to 509 (KLETLQLQYV…AAENVEKVGN (119 aa)) form a regulatory domain region.

It belongs to the alpha-IPM synthase/homocitrate synthase family. LeuA type 1 subfamily. As to quaternary structure, homodimer. Mn(2+) is required as a cofactor.

The protein resides in the cytoplasm. The enzyme catalyses 3-methyl-2-oxobutanoate + acetyl-CoA + H2O = (2S)-2-isopropylmalate + CoA + H(+). It functions in the pathway amino-acid biosynthesis; L-leucine biosynthesis; L-leucine from 3-methyl-2-oxobutanoate: step 1/4. Its function is as follows. Catalyzes the condensation of the acetyl group of acetyl-CoA with 3-methyl-2-oxobutanoate (2-ketoisovalerate) to form 3-carboxy-3-hydroxy-4-methylpentanoate (2-isopropylmalate). The chain is 2-isopropylmalate synthase from Staphylococcus aureus (strain Mu3 / ATCC 700698).